A 690-amino-acid polypeptide reads, in one-letter code: Elongation factor G (690 aa).

Residues 8 to 283 enclose the tr-type G domain; sequence EYIRNIGICA…AVVGFLPSPI (276 aa). Residues 17–24, 81–85, and 135–138 each bind GTP; these read AHIDAGKT, DTPGH, and NKMD.

The protein belongs to the TRAFAC class translation factor GTPase superfamily. Classic translation factor GTPase family. EF-G/EF-2 subfamily.

Its subcellular location is the cytoplasm. Functionally, catalyzes the GTP-dependent ribosomal translocation step during translation elongation. During this step, the ribosome changes from the pre-translocational (PRE) to the post-translocational (POST) state as the newly formed A-site-bound peptidyl-tRNA and P-site-bound deacylated tRNA move to the P and E sites, respectively. Catalyzes the coordinated movement of the two tRNA molecules, the mRNA and conformational changes in the ribosome. This chain is Elongation factor G, found in Rickettsia canadensis (strain McKiel).